Reading from the N-terminus, the 343-residue chain is Holliday junction branch migration complex subunit RuvB (343 aa).

The segment at 1 to 186 (MVMARKSDTL…FQIQERLEYY (186 aa)) is large ATPase domain (RuvB-L). ATP is bound by residues leucine 25, arginine 26, glycine 67, lysine 70, threonine 71, serine 72, 133–135 (EDF), arginine 176, tyrosine 186, and arginine 223. Threonine 71 provides a ligand contact to Mg(2+). Residues 187–257 (DAKALESILH…LAQKSLDRLG (71 aa)) are small ATPAse domain (RuvB-S). Positions 260–343 (ASGLDSMDRK…PPPTPQGSLF (84 aa)) are head domain (RuvB-H). 3 residues coordinate DNA: arginine 296, arginine 315, and arginine 320.

Belongs to the RuvB family. Homohexamer. Forms an RuvA(8)-RuvB(12)-Holliday junction (HJ) complex. HJ DNA is sandwiched between 2 RuvA tetramers; dsDNA enters through RuvA and exits via RuvB. An RuvB hexamer assembles on each DNA strand where it exits the tetramer. Each RuvB hexamer is contacted by two RuvA subunits (via domain III) on 2 adjacent RuvB subunits; this complex drives branch migration. In the full resolvosome a probable DNA-RuvA(4)-RuvB(12)-RuvC(2) complex forms which resolves the HJ.

Its subcellular location is the cytoplasm. The enzyme catalyses ATP + H2O = ADP + phosphate + H(+). Its function is as follows. The RuvA-RuvB-RuvC complex processes Holliday junction (HJ) DNA during genetic recombination and DNA repair, while the RuvA-RuvB complex plays an important role in the rescue of blocked DNA replication forks via replication fork reversal (RFR). RuvA specifically binds to HJ cruciform DNA, conferring on it an open structure. The RuvB hexamer acts as an ATP-dependent pump, pulling dsDNA into and through the RuvAB complex. RuvB forms 2 homohexamers on either side of HJ DNA bound by 1 or 2 RuvA tetramers; 4 subunits per hexamer contact DNA at a time. Coordinated motions by a converter formed by DNA-disengaged RuvB subunits stimulates ATP hydrolysis and nucleotide exchange. Immobilization of the converter enables RuvB to convert the ATP-contained energy into a lever motion, pulling 2 nucleotides of DNA out of the RuvA tetramer per ATP hydrolyzed, thus driving DNA branch migration. The RuvB motors rotate together with the DNA substrate, which together with the progressing nucleotide cycle form the mechanistic basis for DNA recombination by continuous HJ branch migration. Branch migration allows RuvC to scan DNA until it finds its consensus sequence, where it cleaves and resolves cruciform DNA. In Myxococcus xanthus (strain DK1622), this protein is Holliday junction branch migration complex subunit RuvB.